The primary structure comprises 1038 residues: Importin-7 (1038 aa).

N-acetylmethionine is present on Met-1. The 80-residue stretch at 22 to 101 (AERQLNEAHK…RENIVEAIIH (80 aa)) folds into the Importin N-terminal domain. The segment at 881-910 (EHENDSDDDEDAEDDDETEELGSDEDDIDE) is disordered. A compositionally biased stretch (acidic residues) spans 884–910 (NDSDDDEDAEDDDETEELGSDEDDIDE). Phosphoserine is present on Ser-886. At Thr-898 the chain carries Phosphothreonine. Ser-903 and Ser-1020 each carry phosphoserine.

It belongs to the importin beta family. As to quaternary structure, forms a heterodimer with KPNB1. Interacts with histone H1. Interacts with H2A, H2B, H3 and H4 histones. Interacts with SNUPN and XPO1. Interacts with RPS7 and RPL5. Interacts with RPL23A (via BIB domain). Binds directly to nuclear pore complexes. Interacts with SMAD4 and NUP93; translocates SMAD4 to the nucleus through the NPC upon BMP7 stimulation resulting in activation of SMAD4 signaling. Interacts with phosphorylated SMAD2; the interaction facilitates translocation of SMAD2 to the nucleus. Interacts with SRP19. Interacts with RUNX2; the interaction inhibits RUNX2 nuclear translocation in osteoblasts. Interacts with HDAC6, DLX3 and KLF4; the interaction facilitates HDAC6, DLX3 and KLF4 nuclear translocation in dental papilla cells.

Its subcellular location is the cytoplasm. It is found in the nucleus. In terms of biological role, functions in nuclear protein import, either by acting as autonomous nuclear transport receptor or as an adapter-like protein in association with the importin-beta subunit KPNB1. Acting autonomously is thought to serve itself as receptor for nuclear localization signals (NLS) and to promote translocation of import substrates through the nuclear pore complex (NPC) by an energy requiring, Ran-dependent mechanism. At the nucleoplasmic side of the NPC, Ran binds to importin, the importin/substrate complex dissociates and importin is re-exported from the nucleus to the cytoplasm where GTP hydrolysis releases Ran. Mediates autonomously the nuclear import of ribosomal proteins RPL23A, RPS7 and RPL5. In association with KPNB1 mediates the nuclear import of H1 histone and the Ran-binding site of IPO7 is not required but synergizes with that of KPNB1 in importin/substrate complex dissociation. Promotes odontoblast differentiation via promoting nuclear translocation of DLX3, KLF4, SMAD2, thereby facilitating the transcription of target genes that play a role in odontoblast differentiation. Facilitates BMP4-induced translocation of SMAD1 to the nucleus and recruitment to the MSX1 gene promoter, thereby promotes the expression of the odontogenic regulator MSX1 in dental mesenchymal cells. Also promotes odontoblast differentiation by facilitating the nuclear translocation of HDAC6 and subsequent repression of RUNX2 expression. Inhibits osteoblast differentiation by inhibiting nuclear translocation of RUNX2 and therefore inhibition of RUNX2 target gene transcription. In vitro, mediates nuclear import of H2A, H2B, H3 and H4 histones. This is Importin-7 (Ipo7) from Mus musculus (Mouse).